The primary structure comprises 372 residues: UDP-N-acetylglucosamine--N-acetylmuramyl-(pentapeptide) pyrophosphoryl-undecaprenol N-acetylglucosamine transferase (372 aa).

Residues 21–23, asparagine 135, arginine 172, serine 206, and glutamine 303 each bind UDP-N-acetyl-alpha-D-glucosamine; that span reads TAG.

The protein belongs to the glycosyltransferase 28 family. MurG subfamily.

It is found in the cell membrane. The enzyme catalyses di-trans,octa-cis-undecaprenyl diphospho-N-acetyl-alpha-D-muramoyl-L-alanyl-D-glutamyl-meso-2,6-diaminopimeloyl-D-alanyl-D-alanine + UDP-N-acetyl-alpha-D-glucosamine = di-trans,octa-cis-undecaprenyl diphospho-[N-acetyl-alpha-D-glucosaminyl-(1-&gt;4)]-N-acetyl-alpha-D-muramoyl-L-alanyl-D-glutamyl-meso-2,6-diaminopimeloyl-D-alanyl-D-alanine + UDP + H(+). It participates in cell wall biogenesis; peptidoglycan biosynthesis. Cell wall formation. Catalyzes the transfer of a GlcNAc subunit on undecaprenyl-pyrophosphoryl-MurNAc-pentapeptide (lipid intermediate I) to form undecaprenyl-pyrophosphoryl-MurNAc-(pentapeptide)GlcNAc (lipid intermediate II). This Paenarthrobacter aurescens (strain TC1) protein is UDP-N-acetylglucosamine--N-acetylmuramyl-(pentapeptide) pyrophosphoryl-undecaprenol N-acetylglucosamine transferase.